The chain runs to 97 residues: MARVTVEDCLEHVENRFDLVLKAAKRAHILELGGAEPMVPRDNDKPAVLALREIAAGYDVTREGQEQETEEVDVGRNVLAETAKMNKAVASQKESEV.

This sequence belongs to the RNA polymerase subunit omega family. The RNAP catalytic core consists of 2 alpha, 1 beta, 1 beta' and 1 omega subunit. When a sigma factor is associated with the core the holoenzyme is formed, which can initiate transcription.

It catalyses the reaction RNA(n) + a ribonucleoside 5'-triphosphate = RNA(n+1) + diphosphate. Promotes RNA polymerase assembly. Latches the N- and C-terminal regions of the beta' subunit thereby facilitating its interaction with the beta and alpha subunits. In Coxiella burnetii (strain Dugway 5J108-111), this protein is DNA-directed RNA polymerase subunit omega.